Consider the following 416-residue polypeptide: ABSCISIC ACID-INSENSITIVE 5-like protein 5 (416 aa).

A disordered region spans residues 1-23; the sequence is MDGSMNLGNEPPGDGGGGGGLTR. The segment covering 13–22 has biased composition (gly residues); that stretch reads GDGGGGGGLT. Phosphoserine is present on residues S26, S45, and S86. The residue at position 135 (T135) is a Phosphothreonine. Positions 300 to 326 are disordered; it reads SEGIGKSNGDSSSLSPSPYMFNGGVRG. The region spanning 336 to 399 is the bZIP domain; the sequence is VERRQRRMIK…KNQETEMRNL (64 aa). A basic motif region spans residues 338 to 357; sequence RRQRRMIKNRESAARSRARK. Positions 364-385 are leucine-zipper; the sequence is LEAEVAKLKEENDELQRKQARI. The interval 388–416 is disordered; it reads MQKNQETEMRNLLQGGPKKKLRRTESGPW.

The protein belongs to the bZIP family. ABI5 subfamily. As to quaternary structure, DNA-binding heterodimer. Interacts with ARIA. Post-translationally, the activation by phosphorylation is induced by abscisic acid (ABA). Phosphorylated by SRK2C, SRK2D, SRK2E, SRK2F and SRK2I in vitro. Expressed in roots, leaves, flowers and siliques but not in seeds.

It is found in the nucleus. Functionally, involved in ABA and stress responses and acts as a positive component of glucose signal transduction. Functions as a transcriptional activator in the ABA-inducible expression of rd29B. Binds specifically to the ABA-responsive element (ABRE) of the rd29B gene promoter. The polypeptide is ABSCISIC ACID-INSENSITIVE 5-like protein 5 (ABF2) (Arabidopsis thaliana (Mouse-ear cress)).